We begin with the raw amino-acid sequence, 130 residues long: Histidine triad nucleotide-binding protein 1 (130 aa).

One can recognise an HIT domain in the interval 22-130 (LFGKIIRKEI…GGRQLQWPPG (109 aa)). The Histidine triad motif signature appears at 114–118 (HLHLH).

In Caenorhabditis elegans, this protein is Histidine triad nucleotide-binding protein 1 (hint-1).